A 359-amino-acid polypeptide reads, in one-letter code: Peptide chain release factor 1 (359 aa).

Position 236 is an N5-methylglutamine (Gln236).

Belongs to the prokaryotic/mitochondrial release factor family. In terms of processing, methylated by PrmC. Methylation increases the termination efficiency of RF1.

It is found in the cytoplasm. Peptide chain release factor 1 directs the termination of translation in response to the peptide chain termination codons UAG and UAA. The protein is Peptide chain release factor 1 of Ureaplasma parvum serovar 3 (strain ATCC 27815 / 27 / NCTC 11736).